The sequence spans 296 residues: Phosphoribosylaminoimidazole-succinocarboxamide synthase (296 aa).

This sequence belongs to the SAICAR synthetase family.

It catalyses the reaction 5-amino-1-(5-phospho-D-ribosyl)imidazole-4-carboxylate + L-aspartate + ATP = (2S)-2-[5-amino-1-(5-phospho-beta-D-ribosyl)imidazole-4-carboxamido]succinate + ADP + phosphate + 2 H(+). The protein operates within purine metabolism; IMP biosynthesis via de novo pathway; 5-amino-1-(5-phospho-D-ribosyl)imidazole-4-carboxamide from 5-amino-1-(5-phospho-D-ribosyl)imidazole-4-carboxylate: step 1/2. The polypeptide is Phosphoribosylaminoimidazole-succinocarboxamide synthase (Desulfotalea psychrophila (strain LSv54 / DSM 12343)).